The following is a 467-amino-acid chain: UDP-N-acetylmuramate--L-alanine ligase (467 aa).

Residue 114–120 (GTHGKTT) participates in ATP binding.

This sequence belongs to the MurCDEF family.

It is found in the cytoplasm. It catalyses the reaction UDP-N-acetyl-alpha-D-muramate + L-alanine + ATP = UDP-N-acetyl-alpha-D-muramoyl-L-alanine + ADP + phosphate + H(+). It participates in cell wall biogenesis; peptidoglycan biosynthesis. Cell wall formation. This Nitrobacter winogradskyi (strain ATCC 25391 / DSM 10237 / CIP 104748 / NCIMB 11846 / Nb-255) protein is UDP-N-acetylmuramate--L-alanine ligase.